We begin with the raw amino-acid sequence, 400 residues long: Phosphoglycerate kinase (400 aa).

Residues 22 to 24 (DFN), Arg-38, 61 to 64 (HLGR), Arg-119, and Arg-152 contribute to the substrate site. ATP contacts are provided by residues Lys-205, Gly-296, Glu-327, and 353–356 (GGDT).

Belongs to the phosphoglycerate kinase family. As to quaternary structure, monomer.

It localises to the cytoplasm. The enzyme catalyses (2R)-3-phosphoglycerate + ATP = (2R)-3-phospho-glyceroyl phosphate + ADP. The protein operates within carbohydrate degradation; glycolysis; pyruvate from D-glyceraldehyde 3-phosphate: step 2/5. In Campylobacter jejuni subsp. doylei (strain ATCC BAA-1458 / RM4099 / 269.97), this protein is Phosphoglycerate kinase.